The primary structure comprises 112 residues: Ribosome-binding factor A (112 aa).

Belongs to the RbfA family. In terms of assembly, monomer. Binds 30S ribosomal subunits, but not 50S ribosomal subunits or 70S ribosomes.

It localises to the cytoplasm. In terms of biological role, one of several proteins that assist in the late maturation steps of the functional core of the 30S ribosomal subunit. Associates with free 30S ribosomal subunits (but not with 30S subunits that are part of 70S ribosomes or polysomes). Required for efficient processing of 16S rRNA. May interact with the 5'-terminal helix region of 16S rRNA. The sequence is that of Ribosome-binding factor A from Mycoplasmopsis pulmonis (strain UAB CTIP) (Mycoplasma pulmonis).